The primary structure comprises 316 residues: Putative ubiquitin-conjugating enzyme E2 39 (316 aa).

Residues 57 to 217 (NWVKDIQKEW…VFVFSLKTMH (161 aa)) enclose the UBC core domain. The active-site Glycyl thioester intermediate is Cys-143.

The protein belongs to the ubiquitin-conjugating enzyme family.

It carries out the reaction S-ubiquitinyl-[E1 ubiquitin-activating enzyme]-L-cysteine + [E2 ubiquitin-conjugating enzyme]-L-cysteine = [E1 ubiquitin-activating enzyme]-L-cysteine + S-ubiquitinyl-[E2 ubiquitin-conjugating enzyme]-L-cysteine.. Its pathway is protein modification; protein ubiquitination. In terms of biological role, accepts the ubiquitin from the E1 complex and catalyzes its covalent attachment to other proteins. The polypeptide is Putative ubiquitin-conjugating enzyme E2 39 (UBC39) (Arabidopsis thaliana (Mouse-ear cress)).